We begin with the raw amino-acid sequence, 380 residues long: Queuine tRNA-ribosyltransferase (380 aa).

The active-site Proton acceptor is Asp-96. Residues 96–100 (DSGGF), Asp-150, Gln-193, and Gly-220 contribute to the substrate site. Residues 251–257 (GVGAPDS) are RNA binding. Asp-270 (nucleophile) is an active-site residue. Residues 275–279 (TRIAR) form an RNA binding; important for wobble base 34 recognition region. Cys-308, Cys-310, Cys-313, and His-339 together coordinate Zn(2+).

The protein belongs to the queuine tRNA-ribosyltransferase family. In terms of assembly, homodimer. Within each dimer, one monomer is responsible for RNA recognition and catalysis, while the other monomer binds to the replacement base PreQ1. The cofactor is Zn(2+).

It catalyses the reaction 7-aminomethyl-7-carbaguanine + guanosine(34) in tRNA = 7-aminomethyl-7-carbaguanosine(34) in tRNA + guanine. It functions in the pathway tRNA modification; tRNA-queuosine biosynthesis. Catalyzes the base-exchange of a guanine (G) residue with the queuine precursor 7-aminomethyl-7-deazaguanine (PreQ1) at position 34 (anticodon wobble position) in tRNAs with GU(N) anticodons (tRNA-Asp, -Asn, -His and -Tyr). Catalysis occurs through a double-displacement mechanism. The nucleophile active site attacks the C1' of nucleotide 34 to detach the guanine base from the RNA, forming a covalent enzyme-RNA intermediate. The proton acceptor active site deprotonates the incoming PreQ1, allowing a nucleophilic attack on the C1' of the ribose to form the product. After dissociation, two additional enzymatic reactions on the tRNA convert PreQ1 to queuine (Q), resulting in the hypermodified nucleoside queuosine (7-(((4,5-cis-dihydroxy-2-cyclopenten-1-yl)amino)methyl)-7-deazaguanosine). The sequence is that of Queuine tRNA-ribosyltransferase from Streptococcus mutans serotype c (strain ATCC 700610 / UA159).